The primary structure comprises 95 residues: Homeotic protein bicoid (95 aa).

2 disordered regions span residues Asn1–Met29 and Gly42–Asp63.

The protein belongs to the paired homeobox family. Bicoid subfamily.

Its subcellular location is the nucleus. Its function is as follows. Bicoid is polarity protein that provides positional cues for the development of head and thoracic segments. BCD regulates the expression of zygotic genes, possibly through its homeodomain, and inhibits the activity of other maternal gene products. In Drosophila subobscura (Fruit fly), this protein is Homeotic protein bicoid (bcd).